We begin with the raw amino-acid sequence, 164 residues long: SsrA-binding protein (164 aa).

This sequence belongs to the SmpB family.

The protein resides in the cytoplasm. Required for rescue of stalled ribosomes mediated by trans-translation. Binds to transfer-messenger RNA (tmRNA), required for stable association of tmRNA with ribosomes. tmRNA and SmpB together mimic tRNA shape, replacing the anticodon stem-loop with SmpB. tmRNA is encoded by the ssrA gene; the 2 termini fold to resemble tRNA(Ala) and it encodes a 'tag peptide', a short internal open reading frame. During trans-translation Ala-aminoacylated tmRNA acts like a tRNA, entering the A-site of stalled ribosomes, displacing the stalled mRNA. The ribosome then switches to translate the ORF on the tmRNA; the nascent peptide is terminated with the 'tag peptide' encoded by the tmRNA and targeted for degradation. The ribosome is freed to recommence translation, which seems to be the essential function of trans-translation. The sequence is that of SsrA-binding protein from Gluconobacter oxydans (strain 621H) (Gluconobacter suboxydans).